We begin with the raw amino-acid sequence, 708 residues long: Outer capsid protein mu-1 (708 aa).

A lipid anchor (N-myristoyl glycine; by host) is attached at Gly-2. 8 N-linked (GlcNAc...) asparagine; by host glycosylation sites follow: Asn-3, Asn-12, Asn-81, Asn-110, Asn-458, Asn-482, Asn-528, and Asn-659. The segment at 675-708 (PKPDCPTSGDSGESSNRRVKRDSYAGVVKRGYTR) is disordered.

It belongs to the orthoreovirus mu-1 protein family. As to quaternary structure, heterohexamer of three sigma-3 and three Mu-1 proteins. In terms of processing, cleaved during the endosomal proteolytic disassembly of the outer capsid. Mu-1 is proteolytically cleaved into mu-1N and mu-1C during the maturation step to generate the ISVP. Cleavage of mu-1 to mu-1C is dependent on myristoylation and binding to sigma-3 protein. Mu-1C is further cleaved into delta (59 kDa), and phi (13 kDa) segments during entry into the host cell cytoplasm. Post-translationally, mu-1 and mu-1N are N-terminally myristoylated. This acylation is essential for the membrane fusion activity.

The protein localises to the virion. It is found in the host cell membrane. It localises to the host endoplasmic reticulum. The protein resides in the host mitochondrion. Major outer capsid protein involved in host cell membrane penetration. In the endocytic compartment, outer-capsid protein sigma-3 is removed by cathepsin proteases, which exposes the viral membrane-penetration protein mu-1. Both myristoylated peptides mu-1N and phi are released during infectious subvirion particles (ISVP) formation in the endosome. They associate with host membranes and mu-1N induces permeabilization and delivery of transcriptionally active viral particles into the host cell cytoplasm. Seems to induce apoptosis in the host cell. Functionally, the viral outer shell polypeptides, of which mu-1 is one, impose structural constraints that prevent elongation of nascent transcripts by the RNA-dependent RNA polymerase lambda-3. The sequence is that of Outer capsid protein mu-1 (M2) from Mammalia (T3D).